The primary structure comprises 430 residues: Elongation factor 1-gamma (430 aa).

The GST N-terminal domain maps to V2–S84. The GST C-terminal domain maps to S85 to F213. 2 stretches are compositionally biased toward basic and acidic residues: residues K232–E255 and P269–M278. The interval K232–M278 is disordered. The EF-1-gamma C-terminal domain maps to S271–K430.

In terms of assembly, EF-1 is composed of four subunits: alpha, beta, delta, and gamma.

Its function is as follows. Probably plays a role in anchoring the complex to other cellular components. The polypeptide is Elongation factor 1-gamma (Artemia salina (Brine shrimp)).